We begin with the raw amino-acid sequence, 76 residues long: Potassium/proton antiporter CemA (76 aa).

Residues 35 to 52 form a helical membrane-spanning segment; the sequence is QILSCLVSIFPVILDTIF.

It belongs to the CemA family.

It localises to the plastid. It is found in the chloroplast inner membrane. It carries out the reaction K(+)(in) + H(+)(out) = K(+)(out) + H(+)(in). Contributes to K(+)/H(+) antiport activity by supporting proton efflux to control proton extrusion and homeostasis in chloroplasts in a light-dependent manner to modulate photosynthesis. Prevents excessive induction of non-photochemical quenching (NPQ) under continuous-light conditions. Indirectly promotes efficient inorganic carbon uptake into chloroplasts. The protein is Potassium/proton antiporter CemA of Vicia faba (Broad bean).